A 1594-amino-acid chain; its full sequence is MKLYVFLVNTGTTLTFDTELTVQTVADLKHAIQSKYKIAIQHQVLVVNGGECMAADRRVCTYSAGTDTNPIFLFNKEMILCDRPPAIPKTTFSTENDMEIKVEESLMMPAVFHTVASRTQLALEMYEVAKKLCSFCEGLVHDEHLQHQGWAAIMANLEDCSNSYQKLLFKFESIYSNYLQSIEDIKLKLTHLGTAVSVMAKIPLLECLTRHSYRECLGRLDSLPEHEDSEKAEMKRSTELVLSPDMPRTTNESLLTSFPKSVEHVSPDTADAESGKEIRESCQSTVHQQDETTIDTKDGDLPFFNVSLLDWINVQDRPNDVESLVRKCFDSMSRLDPRIIRPFIAECRQTIAKLDNQNMKAIKGLEDRLYALDQMIASCGRLVNEQKELAQGFLANQKRAENLKDASVLPDLCLSHANQLMIMLQNHRKLLDIKQKCTTAKQELANNLHVRLKWCCFVMLHADQDGEKLQALLRLVIELLERVKIVEALSTVPQMYCLAVVEVVRRKMFIKHYREWAGALVKDGKRLYEAEKSKRESFGKLFRKSFLRNRLFRGLDSWPPSFCTQKPRKFDCELPDISLKDLQFLQSFCPSEVQPFLRVPLLCDFEPLHQHVLALHNLVKAAQSLDEMSQTITDLLSEQKASVSQTSPQSASSPRMESTAGITTTTSPRTPPPLTVQDPLCPAVCPLEELSPDSIDAHTFDFETIPHPNIEQTIHQVSLDLDSLAESPESDFMSAVNEFVIEENLSSPNPISDPQSPEMMVESLYSSVINAIDSRRMQDTNVCGKEDFGDHTSLNVQLERCRVVAQDSHFSIQTIKEDLCHFRTFVQKEQCDFSNSLKCTAVEIRNIIEKVKCSLEITLKEKHQKELLSLKNEYEGKLDGLIKETEENENKIKKLKGELVCLEEVLQNKDNEFALVKHEKEAVICLQNEKDQKLLEMENIMHSQNCEIKELKQSREIVLEDLKKLHVENDEKLQLLRAELQSLEQSHLKELEDTLQVRHIQEFEKVMTDHRVSLEELKKENQQIINQIQESHAEIIQEKEKQLQELKLKVSDLSDTRCKLEVELALKEAETDEIKILLEESRAQQKETLKSLLEQETENLRTEISKLNQKIQDNNENYQVGLAELRTLMTIEKDQCISELISRHEEESNILKAELNKVTSLHNQAFEIEKNLKEQIIELQSKLDSELSALERQKDEKITQQEEKYEAIIQNLEKDRQKLVSSQEQDREQLIQKLNCEKDEAIQTALKEFKLEREVVEKELLEKVKHLENQIAKSPAIDSTRGDSSSLVAELQEKLQEEKAKFLEQLEEQEKRKNEEMQNVRTSLIAEQQTNFNTVLTREKMRKENIINDLSDKLKSTMQQQERDKDLIESLSEDRARLLEEKKKLEEEVSKLRSSSFVPSPYVATAPELYGACAPELPGESDRSAVETADEGRVDSAMETSMMSVQENIHMLSEEKQRIMLLERTLQLKEEENKRLNQRLMSQSMSSVSSRHSEKIAIRDFQVGDLVLIILDERHDNYVLFTVSPTLYFLHSESLPALDLKPGEGASGASRRPWVLGKVMEKEYCQAKKAQNRFKVPLGTKFYRVKAVSWNKKV.

A phosphoserine mark is found at Ser-222, Ser-229, and Ser-237. At Thr-238 the chain carries Phosphothreonine. A phosphoserine mark is found at Ser-243, Ser-253, Ser-257, Ser-261, and Ser-266. The Nuclear localization signal signature appears at 566-569 (KPRK). Phosphoserine is present on residues Ser-624, Ser-647, Ser-650, Ser-652, Ser-653, Ser-734, Ser-1091, Ser-1222, Ser-1370, and Ser-1484. The segment at 638–673 (EQKASVSQTSPQSASSPRMESTAGITTTTSPRTPPP) is disordered. The span at 641–654 (ASVSQTSPQSASSP) shows a compositional bias: low complexity. The short motif at 731–737 (DFMSAVN) is the FFAT element. 2 coiled-coil regions span residues 859–1397 (LKEK…SSSF) and 1438–1485 (METS…SQSM).

The protein belongs to the ATG17 family. In terms of assembly, part of a complex consisting of ATG13/KIAA0652, ULK1 and RB1CC1. This complex associates with ATG101. Interacts with PTK2/FAK1 and PTK2B/PYK2. Interacts with GABARAP and GABARAPL1. Interacts with ATG16L1; the interaction is required for ULK1 complex-dependent autophagy. Interacts with RNF111, SKI and SMAD7. Interacts with COP1 in the cytoplasm of proliferating cells in response to UV stimulation. Interacts with TP53. Interacts with C9orf72. Interacts with WDR45B. Interacts with ATG13; this interaction is increased in the absence of TMEM39A. Interacts with WIPI2. Interacts with TAX1BP1. Interacts (via phosphorylated FFAT motif) with MOSPD2, VAPA and VAPB. In terms of processing, phosphorylation at Ser-734 of the FFAT motif activates interaction with MOSPD2, VAPA and VAPB. In terms of tissue distribution, expression levels correlated closely with those of RB1 in cancer cell lines as well as in various normal human tissues. Abundantly expressed in human musculoskeletal and cultured osteosarcoma cells.

Its subcellular location is the nucleus. The protein localises to the cytoplasm. The protein resides in the cytosol. It is found in the preautophagosomal structure. It localises to the lysosome. In terms of biological role, involved in autophagy. Regulates early events but also late events of autophagosome formation through direct interaction with Atg16L1. Required for the formation of the autophagosome-like double-membrane structure that surrounds the Salmonella-containing vacuole (SCV) during S.typhimurium infection and subsequent xenophagy. Involved in repair of DNA damage caused by ionizing radiation, which subsequently improves cell survival by decreasing apoptosis. Inhibits PTK2/FAK1 and PTK2B/PYK2 kinase activity, affecting their downstream signaling pathways. Plays a role as a modulator of TGF-beta-signaling by restricting substrate specificity of RNF111. Functions as a DNA-binding transcription factor. Is a potent regulator of the RB1 pathway through induction of RB1 expression. Plays a crucial role in muscular differentiation. Plays an indispensable role in fetal hematopoiesis and in the regulation of neuronal homeostasis. The sequence is that of RB1-inducible coiled-coil protein 1 from Homo sapiens (Human).